The chain runs to 174 residues: Serine protease 2 (174 aa).

The cysteines at positions 15 and 36 are disulfide-linked. Catalysis depends on charge relay system residues histidine 35, aspartate 65, and serine 147. An intrachain disulfide couples cysteine 141 to cysteine 168.

This sequence belongs to the peptidase S1 family.

The protein localises to the secreted. Broad substrate specificity. The polypeptide is Serine protease 2 (Streptomyces fradiae (Streptomyces roseoflavus)).